Reading from the N-terminus, the 143-residue chain is MFLGTYTPKLDDKGRLTLPAKFREELAGGLMVTKGQDHSLAVYPREEFAARARKAAAVSRTNPEARAFIRNLAASADEQRPDGQGRITLSAAHRTYAGLSKECVVIGSVDFLEIWDAAAWAAYQEETEAAFSSAEGEFLGDFL.

SpoVT-AbrB domains are found at residues 5–47 (TYTP…PREE) and 76–119 (ADEQ…DAAA).

Belongs to the MraZ family. Forms oligomers.

It localises to the cytoplasm. The protein resides in the nucleoid. The polypeptide is Transcriptional regulator MraZ (Corynebacterium diphtheriae (strain ATCC 700971 / NCTC 13129 / Biotype gravis)).